The primary structure comprises 278 residues: uncharacterized protein (278 aa).

The protein belongs to the manganese catalase family.

This is an uncharacterized protein from Bacillus subtilis (strain 168).